The sequence spans 349 residues: UDP-N-acetylenolpyruvoylglucosamine reductase (349 aa).

Positions 26–197 (FDARARVAAR…VAVTFRLPKA (172 aa)) constitute an FAD-binding PCMH-type domain. Residue Arg-173 is part of the active site. Ser-249 serves as the catalytic Proton donor. Residue Glu-345 is part of the active site.

It belongs to the MurB family. FAD is required as a cofactor.

The protein resides in the cytoplasm. It catalyses the reaction UDP-N-acetyl-alpha-D-muramate + NADP(+) = UDP-N-acetyl-3-O-(1-carboxyvinyl)-alpha-D-glucosamine + NADPH + H(+). The protein operates within cell wall biogenesis; peptidoglycan biosynthesis. Cell wall formation. The chain is UDP-N-acetylenolpyruvoylglucosamine reductase from Burkholderia pseudomallei (strain K96243).